Reading from the N-terminus, the 483-residue chain is Dual specificity protein kinase CLK1 (483 aa).

The interval 1–49 is disordered; the sequence is MRHSKRTYCPDWDERDWDYGTWRSSSSHKRKKRSHSSAREQKRCRYDHS. Residues 26-36 show a composition bias toward basic residues; the sequence is SSHKRKKRSHS. The Nuclear localization signal signature appears at 29-33; it reads KRKKR. The segment covering 37–49 has biased composition (basic and acidic residues); it reads SAREQKRCRYDHS. Ser-61 is subject to Phosphoserine. The span at 84–111 shows a compositional bias: low complexity; the sequence is EPGHPYGEPGSRYQMHSSKSSGRSGRSS. The disordered stretch occupies residues 84 to 146; it reads EPGHPYGEPG…SRSVEDDEEG (63 aa). Residues 112-137 are compositionally biased toward basic residues; it reads YKSKHRSRHHTSQHHSHGKSHRRKRS. The residue at position 139 (Ser-139) is a Phosphoserine. The Protein kinase domain maps to 160-476; that stretch reads YEIVDTLGEG…LKEALKHPFF (317 aa). ATP contacts are provided by residues 166-174 and Lys-190; that span reads LGEGAFGKV. Catalysis depends on Asp-287, which acts as the Proton acceptor.

It belongs to the protein kinase superfamily. CMGC Ser/Thr protein kinase family. Lammer subfamily. Interacts with PPIG and UBL5. In terms of processing, autophosphorylates on all three types of residues.

It localises to the nucleus. It catalyses the reaction L-seryl-[protein] + ATP = O-phospho-L-seryl-[protein] + ADP + H(+). The catalysed reaction is L-threonyl-[protein] + ATP = O-phospho-L-threonyl-[protein] + ADP + H(+). It carries out the reaction L-tyrosyl-[protein] + ATP = O-phospho-L-tyrosyl-[protein] + ADP + H(+). Its activity is regulated as follows. Regulates splicing of its own pre-mRNA according to its kinase activity; increased expression of the catalytically active form influences splicing to generate the catalytically inactive splicing variant lacking the kinase domain. Leucettine L41 inhibits its kinase activity and affects the regulation of alternative splicing mediated by phosphorylation of SR proteins. In terms of biological role, dual specificity kinase acting on both serine/threonine and tyrosine-containing substrates. Phosphorylates serine- and arginine-rich (SR) proteins of the spliceosomal complex and may be a constituent of a network of regulatory mechanisms that enable SR proteins to control RNA splicing. Phosphorylates: SRSF1, SRSF3 and PTPN1. Regulates the alternative splicing of tissue factor (F3) pre-mRNA in endothelial cells. The sequence is that of Dual specificity protein kinase CLK1 from Mus musculus (Mouse).